Consider the following 163-residue polypeptide: Early nodulin-like protein 20 (163 aa).

A signal peptide spans 1 to 25 (MMGKYLWALVYVTVMILIIVVEVES). A Phytocyanin domain is found at 26-126 (SLHRVGGGRY…GMKLAITVLP (101 aa)). N-linked (GlcNAc...) asparagine glycans are attached at residues N42, N63, N73, N88, and N135. A disulfide bridge links C80 with C114. Residue S138 is the site of GPI-anchor amidated serine attachment. The propeptide at 139-163 (TTTPLIPPNAITAAILIFAFKALLL) is removed in mature form.

This sequence belongs to the early nodulin-like (ENODL) family.

It is found in the cell membrane. Its function is as follows. May act as a carbohydrate transporter. The chain is Early nodulin-like protein 20 from Arabidopsis thaliana (Mouse-ear cress).